A 140-amino-acid polypeptide reads, in one-letter code: MSTIRCDIVSAEQEIFHGEATFVVATGELGELGIAPKHAPLITRLKPGKVVITTVNGEQLDFAISGGILEVQPQVVTILADSAIRADTIDEVAVRKAKEEAERILANRGETIDVAKAQQQLVEAVVQMQALERLRRTVKH.

Belongs to the ATPase epsilon chain family. As to quaternary structure, F-type ATPases have 2 components, CF(1) - the catalytic core - and CF(0) - the membrane proton channel. CF(1) has five subunits: alpha(3), beta(3), gamma(1), delta(1), epsilon(1). CF(0) has three main subunits: a, b and c.

The protein localises to the cell inner membrane. Its function is as follows. Produces ATP from ADP in the presence of a proton gradient across the membrane. The polypeptide is ATP synthase epsilon chain (Xylella fastidiosa (strain Temecula1 / ATCC 700964)).